Reading from the N-terminus, the 431-residue chain is GTPase Obg (431 aa).

Residues 1–158 (MFVDQVKISL…IEVTLELKLL (158 aa)) form the Obg domain. Residues 118 to 144 (KGGRGGRGNSRFASPRNPAPDFSENGE) are disordered. One can recognise an OBG-type G domain in the interval 159 to 330 (ADVGLVGFPS…LLYAIADKLE (172 aa)). Residues 165-172 (GFPSVGKS), 190-194 (FTTIK), 212-215 (DLPG), 282-285 (NKMD), and 311-313 (STF) contribute to the GTP site. Mg(2+) contacts are provided by serine 172 and threonine 192. Residues 353 to 431 (KHTPSQDKFT…ILGGEFEFVE (79 aa)) form the OCT domain.

It belongs to the TRAFAC class OBG-HflX-like GTPase superfamily. OBG GTPase family. In terms of assembly, monomer. Mg(2+) is required as a cofactor.

The protein resides in the cytoplasm. Its function is as follows. An essential GTPase which binds GTP, GDP and possibly (p)ppGpp with moderate affinity, with high nucleotide exchange rates and a fairly low GTP hydrolysis rate. Plays a role in control of the cell cycle, stress response, ribosome biogenesis and in those bacteria that undergo differentiation, in morphogenesis control. The protein is GTPase Obg of Staphylococcus saprophyticus subsp. saprophyticus (strain ATCC 15305 / DSM 20229 / NCIMB 8711 / NCTC 7292 / S-41).